We begin with the raw amino-acid sequence, 124 residues long: Large ribosomal subunit protein mL52 (124 aa).

Residues 1–23 (MAALGMLLSTGVRRLHCGSAARA) constitute a mitochondrion transit peptide. The disordered stretch occupies residues 99–124 (LQEEKRKQQNALKPKGVLLQNPGPSQ).

This sequence belongs to the mitochondrion-specific ribosomal protein mL52 family. Component of the mitochondrial ribosome large subunit (39S) which comprises a 16S rRNA and about 50 distinct proteins.

It is found in the mitochondrion. In Bos taurus (Bovine), this protein is Large ribosomal subunit protein mL52 (MRPL52).